Consider the following 367-residue polypeptide: 2,6-dihydropseudooxynicotine hydrolase (367 aa).

Catalysis depends on residues E148, S217, D300, and H329.

It belongs to the AB hydrolase superfamily. In terms of assembly, homodimer.

It catalyses the reaction 2,6-dihydroxypseudooxynicotine + H2O = 2,6-dihydroxypyridine + 4-(methylamino)butanoate + H(+). It participates in alkaloid degradation; nicotine degradation; 2,6-dihydroxypyridine and 4-(methylamino)butanoate from 6-hydroxypseudooxynicotine: step 2/2. L-nicotine is used as a growth substrate. Plays a role in nicotine catabolism by cleaving a C-C bond in 2,6-dihydroxypseudooxynicotine. The sequence is that of 2,6-dihydropseudooxynicotine hydrolase from Paenarthrobacter nicotinovorans (Arthrobacter nicotinovorans).